Here is a 338-residue protein sequence, read N- to C-terminus: Phosphate acyltransferase (338 aa).

Belongs to the PlsX family. As to quaternary structure, homodimer. Probably interacts with PlsY.

Its subcellular location is the cytoplasm. The catalysed reaction is a fatty acyl-[ACP] + phosphate = an acyl phosphate + holo-[ACP]. It participates in lipid metabolism; phospholipid metabolism. Catalyzes the reversible formation of acyl-phosphate (acyl-PO(4)) from acyl-[acyl-carrier-protein] (acyl-ACP). This enzyme utilizes acyl-ACP as fatty acyl donor, but not acyl-CoA. This Salinibacter ruber (strain DSM 13855 / M31) protein is Phosphate acyltransferase.